Consider the following 361-residue polypeptide: Probable S-adenosylmethionine-dependent methyltransferase At5g38780 (361 aa).

Residues Y19, C64, N69, D106, L107, S135, and F136 each contribute to the S-adenosyl-L-homocysteine site. Positions 174, 260, 262, and 263 each coordinate Mg(2+).

This sequence belongs to the methyltransferase superfamily. Type-7 methyltransferase family. In terms of assembly, homodimer. Requires Mg(2+) as cofactor.

The sequence is that of Probable S-adenosylmethionine-dependent methyltransferase At5g38780 from Arabidopsis thaliana (Mouse-ear cress).